The following is a 388-amino-acid chain: Succinate--CoA ligase [ADP-forming] subunit beta (388 aa).

An ATP-grasp domain is found at 9 to 244 (KQLFAEFGLP…PSQEDEREAH (236 aa)). ATP contacts are provided by residues Lys-46, 53–55 (GRG), Glu-99, Ser-102, and Glu-107. Residues Asn-199 and Asp-213 each coordinate Mg(2+). Residues Asn-264 and 321–323 (GIV) contribute to the substrate site.

It belongs to the succinate/malate CoA ligase beta subunit family. In terms of assembly, heterotetramer of two alpha and two beta subunits. Mg(2+) serves as cofactor.

The catalysed reaction is succinate + ATP + CoA = succinyl-CoA + ADP + phosphate. It catalyses the reaction GTP + succinate + CoA = succinyl-CoA + GDP + phosphate. The protein operates within carbohydrate metabolism; tricarboxylic acid cycle; succinate from succinyl-CoA (ligase route): step 1/1. Succinyl-CoA synthetase functions in the citric acid cycle (TCA), coupling the hydrolysis of succinyl-CoA to the synthesis of either ATP or GTP and thus represents the only step of substrate-level phosphorylation in the TCA. The beta subunit provides nucleotide specificity of the enzyme and binds the substrate succinate, while the binding sites for coenzyme A and phosphate are found in the alpha subunit. This chain is Succinate--CoA ligase [ADP-forming] subunit beta, found in Vibrio atlanticus (strain LGP32) (Vibrio splendidus (strain Mel32)).